A 157-amino-acid chain; its full sequence is Molybdopterin synthase catalytic subunit (157 aa).

Substrate is bound by residues 103-104 (HR), Lys119, and 126-128 (KKE).

This sequence belongs to the MoaE family. MOCS2B subfamily. As to quaternary structure, heterotetramer; composed of 2 small (MOCS2A) and 2 large (MOCS2B) subunits.

It localises to the cytoplasm. It carries out the reaction 2 [molybdopterin-synthase sulfur-carrier protein]-C-terminal-Gly-aminoethanethioate + cyclic pyranopterin phosphate + H2O = molybdopterin + 2 [molybdopterin-synthase sulfur-carrier protein]-C-terminal Gly-Gly + 2 H(+). It participates in cofactor biosynthesis; molybdopterin biosynthesis. Its function is as follows. Catalytic subunit of the molybdopterin synthase complex, a complex that catalyzes the conversion of precursor Z into molybdopterin. Acts by mediating the incorporation of 2 sulfur atoms from thiocarboxylated MOCS2A into precursor Z to generate a dithiolene group. The sequence is that of Molybdopterin synthase catalytic subunit from Culex quinquefasciatus (Southern house mosquito).